The primary structure comprises 196 residues: Imidazole glycerol phosphate synthase subunit HisH (196 aa).

A Glutamine amidotransferase type-1 domain is found at 2-196 (KVVILDTGCA…AQLLKNFLEM (195 aa)). The active-site Nucleophile is Cys77. Catalysis depends on residues His178 and Glu180.

In terms of assembly, heterodimer of HisH and HisF.

It localises to the cytoplasm. The catalysed reaction is 5-[(5-phospho-1-deoxy-D-ribulos-1-ylimino)methylamino]-1-(5-phospho-beta-D-ribosyl)imidazole-4-carboxamide + L-glutamine = D-erythro-1-(imidazol-4-yl)glycerol 3-phosphate + 5-amino-1-(5-phospho-beta-D-ribosyl)imidazole-4-carboxamide + L-glutamate + H(+). The enzyme catalyses L-glutamine + H2O = L-glutamate + NH4(+). The protein operates within amino-acid biosynthesis; L-histidine biosynthesis; L-histidine from 5-phospho-alpha-D-ribose 1-diphosphate: step 5/9. Functionally, IGPS catalyzes the conversion of PRFAR and glutamine to IGP, AICAR and glutamate. The HisH subunit catalyzes the hydrolysis of glutamine to glutamate and ammonia as part of the synthesis of IGP and AICAR. The resulting ammonia molecule is channeled to the active site of HisF. In Pectobacterium atrosepticum (strain SCRI 1043 / ATCC BAA-672) (Erwinia carotovora subsp. atroseptica), this protein is Imidazole glycerol phosphate synthase subunit HisH.